Here is a 59-residue protein sequence, read N- to C-terminus: Large ribosomal subunit protein uL30 (59 aa).

It belongs to the universal ribosomal protein uL30 family. In terms of assembly, part of the 50S ribosomal subunit.

The protein is Large ribosomal subunit protein uL30 of Hydrogenobaculum sp. (strain Y04AAS1).